An 84-amino-acid polypeptide reads, in one-letter code: Small ribosomal subunit protein bS20 (84 aa).

Belongs to the bacterial ribosomal protein bS20 family.

Binds directly to 16S ribosomal RNA. The chain is Small ribosomal subunit protein bS20 from Porphyromonas gingivalis (strain ATCC 33277 / DSM 20709 / CIP 103683 / JCM 12257 / NCTC 11834 / 2561).